A 279-amino-acid polypeptide reads, in one-letter code: 3-methyl-2-oxobutanoate hydroxymethyltransferase (279 aa).

2 residues coordinate Mg(2+): Asp-43 and Asp-82. Residues 43-44 (DS), Asp-82, and Lys-112 each bind 3-methyl-2-oxobutanoate. Residue Glu-114 participates in Mg(2+) binding. The active-site Proton acceptor is the Glu-181.

It belongs to the PanB family. As to quaternary structure, homodecamer; pentamer of dimers. The cofactor is Mg(2+).

The protein localises to the cytoplasm. It catalyses the reaction 3-methyl-2-oxobutanoate + (6R)-5,10-methylene-5,6,7,8-tetrahydrofolate + H2O = 2-dehydropantoate + (6S)-5,6,7,8-tetrahydrofolate. The protein operates within cofactor biosynthesis; (R)-pantothenate biosynthesis; (R)-pantoate from 3-methyl-2-oxobutanoate: step 1/2. In terms of biological role, catalyzes the reversible reaction in which hydroxymethyl group from 5,10-methylenetetrahydrofolate is transferred onto alpha-ketoisovalerate to form ketopantoate. In Geobacillus sp. (strain WCH70), this protein is 3-methyl-2-oxobutanoate hydroxymethyltransferase.